Reading from the N-terminus, the 401-residue chain is S-adenosylmethionine synthase (401 aa).

Residue 137-142 (GEGSGD) participates in ATP binding. Residues 272–305 (GTSAEQGDDGSVGRGNRSNGLITPNRSMSMEATS) form a disordered region. Over residues 287–305 (NRSNGLITPNRSMSMEATS) the composition is skewed to polar residues.

The protein belongs to the AdoMet synthase 2 family. Mg(2+) serves as cofactor.

It catalyses the reaction L-methionine + ATP + H2O = S-adenosyl-L-methionine + phosphate + diphosphate. It functions in the pathway amino-acid biosynthesis; S-adenosyl-L-methionine biosynthesis; S-adenosyl-L-methionine from L-methionine: step 1/1. Functionally, catalyzes the formation of S-adenosylmethionine from methionine and ATP. This Natronomonas pharaonis (strain ATCC 35678 / DSM 2160 / CIP 103997 / JCM 8858 / NBRC 14720 / NCIMB 2260 / Gabara) (Halobacterium pharaonis) protein is S-adenosylmethionine synthase.